Reading from the N-terminus, the 317-residue chain is Malate dehydrogenase (317 aa).

NAD(+) contacts are provided by residues 13 to 18 (GAGNIG) and Asp-38. The substrate site is built by Arg-87 and Arg-93. NAD(+) is bound by residues Asn-100 and 123–125 (VTN). Substrate-binding residues include Asn-125 and Arg-156. His-180 (proton acceptor) is an active-site residue.

Belongs to the LDH/MDH superfamily. MDH type 3 family.

It carries out the reaction (S)-malate + NAD(+) = oxaloacetate + NADH + H(+). Functionally, catalyzes the reversible oxidation of malate to oxaloacetate. The polypeptide is Malate dehydrogenase (Anaplasma marginale (strain Florida)).